The chain runs to 484 residues: Glutamyl-tRNA(Gln) amidotransferase subunit A (484 aa).

Catalysis depends on charge relay system residues Lys-74 and Ser-149. The active-site Acyl-ester intermediate is Ser-173.

This sequence belongs to the amidase family. GatA subfamily. In terms of assembly, heterotrimer of A, B and C subunits.

It carries out the reaction L-glutamyl-tRNA(Gln) + L-glutamine + ATP + H2O = L-glutaminyl-tRNA(Gln) + L-glutamate + ADP + phosphate + H(+). Its function is as follows. Allows the formation of correctly charged Gln-tRNA(Gln) through the transamidation of misacylated Glu-tRNA(Gln) in organisms which lack glutaminyl-tRNA synthetase. The reaction takes place in the presence of glutamine and ATP through an activated gamma-phospho-Glu-tRNA(Gln). The polypeptide is Glutamyl-tRNA(Gln) amidotransferase subunit A (Prochlorococcus marinus subsp. pastoris (strain CCMP1986 / NIES-2087 / MED4)).